The following is a 376-amino-acid chain: Erythronate-4-phosphate dehydrogenase (376 aa).

The substrate site is built by serine 45 and threonine 67. Aspartate 147 is a binding site for NAD(+). Arginine 209 is an active-site residue. Aspartate 233 lines the NAD(+) pocket. Glutamate 238 is an active-site residue. Histidine 255 acts as the Proton donor in catalysis. Position 258 (glycine 258) interacts with NAD(+). Position 259 (tyrosine 259) interacts with substrate.

Belongs to the D-isomer specific 2-hydroxyacid dehydrogenase family. PdxB subfamily. Homodimer.

The protein localises to the cytoplasm. The catalysed reaction is 4-phospho-D-erythronate + NAD(+) = (R)-3-hydroxy-2-oxo-4-phosphooxybutanoate + NADH + H(+). It functions in the pathway cofactor biosynthesis; pyridoxine 5'-phosphate biosynthesis; pyridoxine 5'-phosphate from D-erythrose 4-phosphate: step 2/5. Catalyzes the oxidation of erythronate-4-phosphate to 3-hydroxy-2-oxo-4-phosphonooxybutanoate. This chain is Erythronate-4-phosphate dehydrogenase, found in Shewanella sp. (strain W3-18-1).